Reading from the N-terminus, the 392-residue chain is MASHKLLVHPPKALLKPLSIPNRLLLGPGPSNLAPRIMAAGGLQIIGPMSKDMYQIMDEIKEGIRYVFQTRNPLTLVISGSAHCALEAALVNVLEPGDSFLVGANGIWGQRAVDIGERMGARVHPMTKDPGGHYTLQEVEEGLAQHKPVLLFLTHGESSTGVLQPLDGFGELCHRYKCLLLVDSVVSVGGTPVYMDQQGIDILYSGSQKALNAPPGTSLISFSDKAKKKMYSRKTKPFSFYLDIKWLANFWGCDDQPRMYHHTIPIISLYSLRESLALIAEQGLENSWRKHREAAAYLHGRLQALGLQLFVKDPALRLPTVTTVAVPAGYDWRDIVSYVMDHFDIEIMGGLGPPTGKVLRIGLLGYNATHENVDRVTEALRAALQHCPKKKL.

Lysine 209 is modified (N6-(pyridoxal phosphate)lysine). Residue lysine 225 is modified to N6-acetyllysine; alternate. At lysine 225 the chain carries N6-succinyllysine; alternate. N6-acetyllysine occurs at positions 234 and 312. Arginine 360 serves as a coordination point for substrate. A Microbody targeting signal motif is present at residues 390–392 (KKL).

Belongs to the class-V pyridoxal-phosphate-dependent aminotransferase family. As to quaternary structure, homodimer. It depends on pyridoxal 5'-phosphate as a cofactor.

The protein resides in the peroxisome. It catalyses the reaction L-serine + pyruvate = 3-hydroxypyruvate + L-alanine. The catalysed reaction is glyoxylate + L-alanine = glycine + pyruvate. In terms of biological role, peroxisomal aminotransferase that catalyzes the transamination of glyoxylate to glycine and contributes to the glyoxylate detoxification. Also catalyzes the transamination between L-serine and pyruvate and contributes to gluconeogenesis from the L-serine metabolism. This is Alanine--glyoxylate aminotransferase from Pongo abelii (Sumatran orangutan).